The sequence spans 291 residues: Farnesyl diphosphate synthase (291 aa).

Isopentenyl diphosphate is bound by residues Lys44, Arg47, and His76. Asp83 and Asp89 together coordinate Mg(2+). Arg94 provides a ligand contact to (2E)-geranyl diphosphate. Arg95 serves as a coordination point for isopentenyl diphosphate. (2E)-geranyl diphosphate contacts are provided by Lys177, Thr178, Gln215, and Lys232.

It belongs to the FPP/GGPP synthase family. Mg(2+) is required as a cofactor.

The protein resides in the cytoplasm. The enzyme catalyses isopentenyl diphosphate + (2E)-geranyl diphosphate = (2E,6E)-farnesyl diphosphate + diphosphate. The sequence is that of Farnesyl diphosphate synthase (fps) from Micrococcus luteus (Micrococcus lysodeikticus).